A 75-amino-acid polypeptide reads, in one-letter code: Small ribosomal subunit protein bS18 (75 aa).

The protein belongs to the bacterial ribosomal protein bS18 family. As to quaternary structure, part of the 30S ribosomal subunit. Forms a tight heterodimer with protein bS6.

Its function is as follows. Binds as a heterodimer with protein bS6 to the central domain of the 16S rRNA, where it helps stabilize the platform of the 30S subunit. The protein is Small ribosomal subunit protein bS18 of Ruegeria sp. (strain TM1040) (Silicibacter sp.).